Reading from the N-terminus, the 175-residue chain is Peptidyl-prolyl cis-trans isomerase B (175 aa).

Residues 3–172 (EQLYATLKTN…EDVVIESVVV (170 aa)) form the PPIase cyclophilin-type domain.

The protein belongs to the cyclophilin-type PPIase family.

It localises to the cytoplasm. It carries out the reaction [protein]-peptidylproline (omega=180) = [protein]-peptidylproline (omega=0). With respect to regulation, inhibited by cyclosporin A (CsA). Its function is as follows. PPIases accelerate the folding of proteins. It catalyzes the cis-trans isomerization of proline imidic peptide bonds in oligopeptides. The sequence is that of Peptidyl-prolyl cis-trans isomerase B (cypB) from Streptomyces anulatus (Streptomyces chrysomallus).